Consider the following 535-residue polypeptide: MTKFIFVTGGVVSSLGKGITAASLGRLLKSRGLKVAIQKFDPYINVDPGTMSPYQHGEVFVTDDGAETDLDLGHYERFIDINLTKNSNVTTGKVYWAVISKERRGDYLGGTVQVIPHITNEIKERILRVAKESNPDVVITEIGGTVGDIESLPFLEAIRQLKNDVGKDNVLYIHVTLVPTLRVTGELKTKPTQHSVKELRSIGIQPDIIVARSEQPLSREITEKIALFCDIDKNAVIQAVDASNIYEVPLKLKEEGLDDIVIKKLGLTCGEPDLSEWEQIVERYKNPKFEVTIGIVGKYVSLPDAYLSVAEALRHAGIYHETRVNIRWIDSEMLEKEPVEKYLSNLDGILVPGGFGDRGVEGKIKAIQYARENKVPYLGLCLGMQTAVIEFARNVAGLKDANSSEFKPDGPHSVIDLLPEQKEVEQLGGTMRLGLYPCKLVPGTKAHAAYGEEIIYERHRHRYEFNNEYRELLTGLGLVISGTSPDGRLVEIIELSDHPWFVATQFHPEFKSRPNRPHPLFREFIGASLKTNKLF.

The interval 1 to 267 (MTKFIFVTGG…DDIVIKKLGL (267 aa)) is amidoligase domain. Serine 13 provides a ligand contact to CTP. Serine 13 is a binding site for UTP. 14–19 (SLGKGI) contributes to the ATP binding site. Tyrosine 54 is an L-glutamine binding site. Aspartate 71 contacts ATP. The Mg(2+) site is built by aspartate 71 and glutamate 141. CTP-binding positions include 148–150 (DIE), 188–193 (KTKPTQ), and lysine 224. Residues 188–193 (KTKPTQ) and lysine 224 contribute to the UTP site. A Glutamine amidotransferase type-1 domain is found at 292–534 (TIGIVGKYVS…IGASLKTNKL (243 aa)). Glycine 354 lines the L-glutamine pocket. Residue cysteine 381 is the Nucleophile; for glutamine hydrolysis of the active site. Residues 382–385 (LGMQ), glutamate 405, and arginine 462 contribute to the L-glutamine site. Residues histidine 507 and glutamate 509 contribute to the active site.

It belongs to the CTP synthase family. As to quaternary structure, homotetramer.

It catalyses the reaction UTP + L-glutamine + ATP + H2O = CTP + L-glutamate + ADP + phosphate + 2 H(+). The enzyme catalyses L-glutamine + H2O = L-glutamate + NH4(+). The catalysed reaction is UTP + NH4(+) + ATP = CTP + ADP + phosphate + 2 H(+). Its pathway is pyrimidine metabolism; CTP biosynthesis via de novo pathway; CTP from UDP: step 2/2. Its activity is regulated as follows. Allosterically activated by GTP, when glutamine is the substrate; GTP has no effect on the reaction when ammonia is the substrate. The allosteric effector GTP functions by stabilizing the protein conformation that binds the tetrahedral intermediate(s) formed during glutamine hydrolysis. Inhibited by the product CTP, via allosteric rather than competitive inhibition. Its function is as follows. Catalyzes the ATP-dependent amination of UTP to CTP with either L-glutamine or ammonia as the source of nitrogen. Regulates intracellular CTP levels through interactions with the four ribonucleotide triphosphates. The protein is CTP synthase of Carboxydothermus hydrogenoformans (strain ATCC BAA-161 / DSM 6008 / Z-2901).